The chain runs to 713 residues: Nuclear poly(A) polymerase 1 (713 aa).

ATP is bound by residues 91 to 93 (FGS), 103 to 106 (ADID), aspartate 159, tyrosine 229, and 238 to 239 (GI). Residues aspartate 104, aspartate 106, and aspartate 159 each contribute to the Mg(2+) site. The disordered stretch occupies residues 480 to 555 (FVFPGGVRPS…TLTDQPRNSK (76 aa)). The segment covering 507–526 (SSTSSAPAATTTTTEMSSES) has biased composition (low complexity).

It belongs to the poly(A) polymerase family. Monomer. Forms a complex with cleavage and polyadenylation specificity factor (CPSF) subunit PAPS4. Requires Mg(2+) as cofactor. The cofactor is Mn(2+). In terms of tissue distribution, expressed in stems, cotyledons, hypocotyls, radicle, leaves, and, to a lower extent, in roots (including primary and secondary roots as well as root tips) and flowers. In radicle, roots and leaves, mainly present in vascular tissues.

The protein localises to the nucleus. It carries out the reaction RNA(n) + ATP = RNA(n)-3'-adenine ribonucleotide + diphosphate. Essential protein. Polymerase that creates the 3'-poly(A) tail of mRNA's. Also required for the endoribonucleolytic cleavage reaction at some polyadenylation sites. May acquire specificity through interaction with a cleavage and polyadenylation specificity factor (CPSF) at its C-terminus. The polypeptide is Nuclear poly(A) polymerase 1 (Arabidopsis thaliana (Mouse-ear cress)).